The chain runs to 86 residues: Protein Tat (86 aa).

The interval 1 to 24 is interaction with human CREBBP; that stretch reads MEPVDPRLEPWKHPGSQPKTACTN. The segment at 1-48 is transactivation; that stretch reads MEPVDPRLEPWKHPGSQPKTACTNCYCKKCCFHCQVCFITKALGISYG. 3 residues coordinate Zn(2+): Cys-22, Cys-25, and Cys-27. The tract at residues 22–37 is cysteine-rich; sequence CTNCYCKKCCFHCQVC. N6-acetyllysine; by host PCAF is present on Lys-28. Zn(2+)-binding residues include Cys-30, His-33, Cys-34, and Cys-37. The core stretch occupies residues 38 to 48; sequence FITKALGISYG. Basic residues predominate over residues 48 to 58; that stretch reads GRKKRRQRRRA. Positions 48–86 are disordered; it reads GRKKRRQRRRAPQGSQTHQVSLSKQPTSQSRGDPTGPKE. Residues 49-57 carry the Nuclear localization signal, RNA-binding (TAR), and protein transduction motif; the sequence is RKKRRQRRR. An interaction with the host capping enzyme RNGTT region spans residues 49–86; it reads RKKRRQRRRAPQGSQTHQVSLSKQPTSQSRGDPTGPKE. Lys-50 and Lys-51 each carry N6-acetyllysine; by host EP300 and GCN5L2. Residues Arg-52 and Arg-53 each carry the asymmetric dimethylarginine; by host PRMT6 modification. Polar residues predominate over residues 60–79; the sequence is QGSQTHQVSLSKQPTSQSRG. Lys-71 participates in a covalent cross-link: Glycyl lysine isopeptide (Lys-Gly) (interchain with G-Cter in ubiquitin). Positions 78–80 match the Cell attachment site motif; sequence RGD.

The protein belongs to the lentiviruses Tat family. As to quaternary structure, interacts with host CCNT1. Associates with the P-TEFb complex composed at least of Tat, P-TEFb (CDK9 and CCNT1), TAR RNA, RNA Pol II. Recruits the HATs CREBBP, TAF1/TFIID, EP300, PCAF and GCN5L2. Interacts with host KAT5/Tip60; this interaction targets the latter to degradation. Interacts with the host deacetylase SIRT1. Interacts with host capping enzyme RNGTT; this interaction stimulates RNGTT. Binds to host KDR, and to the host integrins ITGAV/ITGB3 and ITGA5/ITGB1. Interacts with host KPNB1/importin beta-1 without previous binding to KPNA1/importin alpha-1. Interacts with EIF2AK2. Interacts with host nucleosome assembly protein NAP1L1; this interaction may be required for the transport of Tat within the nucleus, since the two proteins interact at the nuclear rim. Interacts with host C1QBP/SF2P32; this interaction involves lysine-acetylated Tat. Interacts with the host chemokine receptors CCR2, CCR3 and CXCR4. Interacts with host DPP4/CD26; this interaction may trigger an anti-proliferative effect. Interacts with host LDLR. Interacts with the host extracellular matrix metalloproteinase MMP1. Interacts with host PRMT6; this interaction mediates Tat's methylation. Interacts with, and is ubiquitinated by MDM2/Hdm2. Interacts with host PSMC3 and HTATIP2. Interacts with STAB1; this interaction may overcome SATB1-mediated repression of IL2 and IL2RA (interleukin) in T cells by binding to the same domain than HDAC1. Interacts (when acetylated) with human CDK13, thereby increasing HIV-1 mRNA splicing and promoting the production of the doubly spliced HIV-1 protein Nef. Interacts with host TBP; this interaction modulates the activity of transcriptional pre-initiation complex. Interacts with host RELA. Interacts with host PLSCR1; this interaction negatively regulates Tat transactivation activity by altering its subcellular distribution. In terms of processing, asymmetrical arginine methylation by host PRMT6 seems to diminish the transactivation capacity of Tat and affects the interaction with host CCNT1. Post-translationally, acetylation by EP300, CREBBP, GCN5L2/GCN5 and PCAF regulates the transactivation activity of Tat. EP300-mediated acetylation of Lys-50 promotes dissociation of Tat from the TAR RNA through the competitive binding to PCAF's bromodomain. In addition, the non-acetylated Tat's N-terminus can also interact with PCAF. PCAF-mediated acetylation of Lys-28 enhances Tat's binding to CCNT1. Lys-50 is deacetylated by SIRT1. Polyubiquitination by host MDM2 does not target Tat to degradation, but activates its transactivation function and fosters interaction with CCNT1 and TAR RNA. In terms of processing, phosphorylated by EIF2AK2 on serine and threonine residues adjacent to the basic region important for TAR RNA binding and function. Phosphorylation of Tat by EIF2AK2 is dependent on the prior activation of EIF2AK2 by dsRNA.

The protein localises to the host nucleus. It is found in the host nucleolus. It localises to the host cytoplasm. Its subcellular location is the secreted. In terms of biological role, transcriptional activator that increases RNA Pol II processivity, thereby increasing the level of full-length viral transcripts. Recognizes a hairpin structure at the 5'-LTR of the nascent viral mRNAs referred to as the transactivation responsive RNA element (TAR) and recruits the cyclin T1-CDK9 complex (P-TEFb complex) that will in turn hyperphosphorylate the RNA polymerase II to allow efficient elongation. The CDK9 component of P-TEFb and other Tat-activated kinases hyperphosphorylate the C-terminus of RNA Pol II that becomes stabilized and much more processive. Other factors such as HTATSF1/Tat-SF1, SUPT5H/SPT5, and HTATIP2 are also important for Tat's function. Besides its effect on RNA Pol II processivity, Tat induces chromatin remodeling of proviral genes by recruiting the histone acetyltransferases (HATs) CREBBP, EP300 and PCAF to the chromatin. This also contributes to the increase in proviral transcription rate, especially when the provirus integrates in transcriptionally silent region of the host genome. To ensure maximal activation of the LTR, Tat mediates nuclear translocation of NF-kappa-B by interacting with host RELA. Through its interaction with host TBP, Tat may also modulate transcription initiation. Tat can reactivate a latently infected cell by penetrating in it and transactivating its LTR promoter. In the cytoplasm, Tat is thought to act as a translational activator of HIV-1 mRNAs. Its function is as follows. Extracellular circulating Tat can be endocytosed by surrounding uninfected cells via the binding to several surface receptors such as CD26, CXCR4, heparan sulfate proteoglycans (HSPG) or LDLR. Neurons are rarely infected, but they internalize Tat via their LDLR. Through its interaction with nuclear HATs, Tat is potentially able to control the acetylation-dependent cellular gene expression. Modulates the expression of many cellular genes involved in cell survival, proliferation or in coding for cytokines or cytokine receptors. Tat plays a role in T-cell and neurons apoptosis. Tat induced neurotoxicity and apoptosis probably contribute to neuroAIDS. Circulating Tat also acts as a chemokine-like and/or growth factor-like molecule that binds to specific receptors on the surface of the cells, affecting many cellular pathways. In the vascular system, Tat binds to ITGAV/ITGB3 and ITGA5/ITGB1 integrins dimers at the surface of endothelial cells and competes with bFGF for heparin-binding sites, leading to an excess of soluble bFGF. The chain is Protein Tat from Human immunodeficiency virus type 1 group M subtype B (isolate PCV12) (HIV-1).